The chain runs to 244 residues: Cell adhesion molecule CEACAM4 (244 aa).

Residues M1–Q35 form the signal peptide. One can recognise an Ig-like V-type domain in the interval F36–H139. Over F36 to G155 the chain is Extracellular. 4 N-linked (GlcNAc...) asparagine glycosylation sites follow: N57, N104, N111, and N126. A helical membrane pass occupies residues I156–L176. At S177–S244 the chain is on the cytoplasmic side. The tract at residues R186–P215 is disordered. Residues Y222–I236 carry the ITAM motif.

This sequence belongs to the immunoglobulin superfamily. CEA family. In terms of assembly, interacts through its phosphorylated ITAM domain with the SH2 domain-containing cytoplasmic proteins involved in signaling processes during phagocytosis. Post-translationally, N-glycosylated. In terms of processing, the cytoplasmic ITAM-like sequence becomes tyrosine phosphorylated by SRC family PTKs upon ligand-mediated receptor clustering and allows to initiate phagocytosis of bound ligand. Granulocytes.

It is found in the membrane. Functionally, granulocyte orphan receptor that acts as an trigger efficient phagocytosis of attached particles. The polypeptide is Cell adhesion molecule CEACAM4 (Homo sapiens (Human)).